The primary structure comprises 162 residues: Transcription elongation factor GreA (162 aa).

Positions 45-74 (ENAEYEAAREKQAFIEGRIKELEDMTARAE) form a coiled coil.

It belongs to the GreA/GreB family.

In terms of biological role, necessary for efficient RNA polymerase transcription elongation past template-encoded arresting sites. The arresting sites in DNA have the property of trapping a certain fraction of elongating RNA polymerases that pass through, resulting in locked ternary complexes. Cleavage of the nascent transcript by cleavage factors such as GreA or GreB allows the resumption of elongation from the new 3'terminus. GreA releases sequences of 2 to 3 nucleotides. The chain is Transcription elongation factor GreA from Rickettsia felis (strain ATCC VR-1525 / URRWXCal2) (Rickettsia azadi).